The chain runs to 223 residues: Kinetochore protein Spc25 (223 aa).

Positions Arg51 to Leu119 form a coiled coil.

This sequence belongs to the SPC25 family. In terms of assembly, component of the Ndc80 complex, which is composed of Ndc80, Nuf2 and Spc25.

The protein localises to the nucleus. Its subcellular location is the chromosome. The protein resides in the centromere. It localises to the kinetochore. In terms of biological role, acts as a component of the essential kinetochore-associated Ndc80 complex, which is required for chromosome segregation and spindle checkpoint activity during meiosis and mitosis. Required for kinetochore integrity and the organization of stable microtubule binding sites in the outer plate of the kinetochore. Participates in SAC signaling that responds specifically to disruptions in spindle microtubule dynamics. The NDC80 complex synergistically enhances the affinity of the SKA1 complex for microtubules and may allow the NDC80 complex to track depolymerizing microtubules. In Drosophila teissieri (Fruit fly), this protein is Kinetochore protein Spc25.